Reading from the N-terminus, the 226-residue chain is Eukaryotic translation initiation factor 3 subunit K (226 aa).

Residues 42-200 form the PCI domain; the sequence is YNLDANLSLL…QLIVLPRNEF (159 aa).

It belongs to the eIF-3 subunit K family. Component of the eukaryotic translation initiation factor 3 (eIF-3) complex.

Its subcellular location is the cytoplasm. In terms of biological role, component of the eukaryotic translation initiation factor 3 (eIF-3) complex, which is involved in protein synthesis of a specialized repertoire of mRNAs and, together with other initiation factors, stimulates binding of mRNA and methionyl-tRNAi to the 40S ribosome. The eIF-3 complex specifically targets and initiates translation of a subset of mRNAs involved in cell proliferation. This Oryza sativa subsp. japonica (Rice) protein is Eukaryotic translation initiation factor 3 subunit K (TIF3K1).